The chain runs to 1651 residues: Roundabout homolog 1 (1651 aa).

The first 25 residues, 1–25 (MKWKHLPLLVMISLLTLSKKHLLLA), serve as a signal peptide directing secretion. The Extracellular portion of the chain corresponds to 26–897 (QLIPDPEDLE…QQISDVVKQP (872 aa)). The interval 31 to 66 (PEDLERGNDNGTPAPTSDNDDNSLGYTGSRLRQEDF) is disordered. The span at 39 to 56 (DNGTPAPTSDNDDNSLGY) shows a compositional bias: polar residues. 5 Ig-like C2-type domains span residues 68–164 (PRIV…ASLE), 170–257 (DDFR…ADVT), 262–346 (PSFV…ATLT), 351–446 (PHFV…LEVT), and 455–541 (PVIR…AYIE). C89 and C147 are joined by a disulfide. A glycan (N-linked (GlcNAc...) asparagine) is linked at N160. Disulfide bonds link C191/C240, C283/C330, and C372/C428. N-linked (GlcNAc...) asparagine glycosylation is present at N463. Residues C476 and C525 are joined by a disulfide bond. Fibronectin type-III domains lie at 563-657 (APSK…TQDV), 676-773 (VVLH…TLEE), and 778-874 (PPRS…LDSH). N790, N820, and N827 each carry an N-linked (GlcNAc...) asparagine glycan. Residues 898 to 918 (AFIAGIGAACWIILMVFSIWL) traverse the membrane as a helical segment. Residues 919-1651 (YRHRKKRNGL…NNEELEETES (733 aa)) lie on the Cytoplasmic side of the membrane. Residue S940 is modified to Phosphoserine. Phosphothreonine is present on T948. Residue Y1038 is modified to Phosphotyrosine. A Phosphoserine modification is found at S1055. Y1073 carries the phosphotyrosine modification. Positions 1086-1107 (NMNNGGGDSSEKHWKPPGQQKQ) are disordered. Y1114 carries the phosphotyrosine modification. Disordered regions lie at residues 1137–1337 (PYNH…ADME), 1352–1397 (EQTP…DGSF), and 1420–1651 (RRQM…ETES). Residues 1147–1163 (GGSYNSSDRGSSTSGSQ) are compositionally biased toward low complexity. Over residues 1186–1196 (LPPPPAHPPPH) the composition is skewed to pro residues. T1240 is modified (phosphothreonine). Over residues 1255-1269 (YSHQSTATLTPSPQE) the composition is skewed to polar residues. Basic and acidic residues predominate over residues 1281 to 1293 (DLGHMPHPPDRRR). The segment covering 1296–1307 (VSPPPPPRPISP) has biased composition (pro residues). A Phosphoserine modification is found at S1297. Acidic residues predominate over residues 1322-1336 (MDTDAPEEEEDEADM). Residues 1384–1397 (SSGRSSVSSSDGSF) show a composition bias toward low complexity. Over residues 1438–1451 (PRPTSPVSTDSNMS) the composition is skewed to polar residues. Residues 1459-1470 (RPTKKQKHQPGH) show a composition bias toward basic residues. The segment covering 1480–1490 (LPPPPVPPPAI) has biased composition (pro residues). Basic and acidic residues-rich tracts occupy residues 1516–1541 (ARAD…RQVT) and 1549–1573 (DPRE…RDLP). Positions 1592-1601 (FPTSNNPRDP) are enriched in polar residues. Residues 1602–1614 (SSSSSMSSRGSGS) are compositionally biased toward low complexity. The segment covering 1642 to 1651 (NNEELEETES) has biased composition (acidic residues).

It belongs to the immunoglobulin superfamily. ROBO family. In terms of assembly, homodimer. Dimerization is mediated by the extracellular domain and is independent of SLIT liganding. Interacts with SLIT1. Interacts with SLIT2. Interacts with FLRT3. Interacts with MYO9B (via Rho-GAP domain). In terms of processing, ubiquitinated. May be deubiquitinated by USP33. As to expression, expressed in embryonal brain and spinal cord.

The protein localises to the cell membrane. The protein resides in the cell projection. It is found in the axon. It localises to the endoplasmic reticulum-Golgi intermediate compartment membrane. In terms of biological role, receptor for SLIT1 and SLIT2 that mediates cellular responses to molecular guidance cues in cellular migration, including axonal navigation at the ventral midline of the neural tube and projection of axons to different regions during neuronal development. Interaction with the intracellular domain of FLRT3 mediates axon attraction towards cells expressing NTN1. In axon growth cones, the silencing of the attractive effect of NTN1 by SLIT2 may require the formation of a ROBO1-DCC complex. Plays a role in the regulation of cell migration via its interaction with MYO9B; inhibits MYO9B-mediated stimulation of RHOA GTPase activity, and thereby leads to increased levels of active, GTP-bound RHOA. May be required for lung development. The chain is Roundabout homolog 1 (Robo1) from Rattus norvegicus (Rat).